The chain runs to 546 residues: NAD(P)H-quinone oxidoreductase chain 4 (546 aa).

The next 14 helical transmembrane spans lie at 24 to 44 (FPWL…IPFF), 56 to 76 (FALS…INGF), 106 to 126 (ISMP…LAAW), 132 to 152 (PKLF…VFAV), 156 to 176 (LLFF…LAIW), 188 to 208 (FIIY…AMGF), 232 to 252 (ILCY…VPLH), 263 to 283 (TAPV…YALL), 297 to 317 (FAPL…LTSF), 326 to 346 (IAYS…SFSS), 352 to 372 (AMLQ…LVGA), 396 to 416 (FALW…SGFV), 437 to 457 (VVMA…LLSM), and 484 to 504 (VYII…PRLV).

This sequence belongs to the complex I subunit 4 family.

It is found in the cellular thylakoid membrane. The enzyme catalyses a plastoquinone + NADH + (n+1) H(+)(in) = a plastoquinol + NAD(+) + n H(+)(out). The catalysed reaction is a plastoquinone + NADPH + (n+1) H(+)(in) = a plastoquinol + NADP(+) + n H(+)(out). Functionally, NDH-1 shuttles electrons from NAD(P)H, via FMN and iron-sulfur (Fe-S) centers, to quinones in the respiratory chain. The immediate electron acceptor for the enzyme in this species is believed to be plastoquinone. Couples the redox reaction to proton translocation (for every two electrons transferred, four hydrogen ions are translocated across the cytoplasmic membrane), and thus conserves the redox energy in a proton gradient. This is NAD(P)H-quinone oxidoreductase chain 4 from Prochlorococcus marinus (strain MIT 9515).